The chain runs to 353 residues: Ribosomal RNA large subunit methyltransferase M (353 aa).

S-adenosyl-L-methionine-binding positions include Ser-183, 216-219 (APGG), Asp-235, Asp-255, and Asp-271. Lys-300 acts as the Proton acceptor in catalysis.

The protein belongs to the class I-like SAM-binding methyltransferase superfamily. RNA methyltransferase RlmE family. RlmM subfamily. Monomer.

It localises to the cytoplasm. It carries out the reaction cytidine(2498) in 23S rRNA + S-adenosyl-L-methionine = 2'-O-methylcytidine(2498) in 23S rRNA + S-adenosyl-L-homocysteine + H(+). Its function is as follows. Catalyzes the 2'-O-methylation at nucleotide C2498 in 23S rRNA. The sequence is that of Ribosomal RNA large subunit methyltransferase M from Azotobacter vinelandii (strain DJ / ATCC BAA-1303).